A 271-amino-acid polypeptide reads, in one-letter code: Putative protein FAM220BP (271 aa).

The sequence is that of Putative protein FAM220BP (FAM220BP) from Homo sapiens (Human).